A 163-amino-acid chain; its full sequence is Phosphopantetheine adenylyltransferase (163 aa).

Position 11 (S11) interacts with substrate. Residues S11 to F12 and H19 each bind ATP. Residues K43, A76, and R90 each coordinate substrate. ATP contacts are provided by residues G91–R93, E101, and W126–S132.

The protein belongs to the bacterial CoaD family. As to quaternary structure, homohexamer. Mg(2+) serves as cofactor.

Its subcellular location is the cytoplasm. It carries out the reaction (R)-4'-phosphopantetheine + ATP + H(+) = 3'-dephospho-CoA + diphosphate. It participates in cofactor biosynthesis; coenzyme A biosynthesis; CoA from (R)-pantothenate: step 4/5. Functionally, reversibly transfers an adenylyl group from ATP to 4'-phosphopantetheine, yielding dephospho-CoA (dPCoA) and pyrophosphate. In Streptococcus pyogenes serotype M6 (strain ATCC BAA-946 / MGAS10394), this protein is Phosphopantetheine adenylyltransferase.